The following is a 441-amino-acid chain: Transcriptional regulatory protein ZraR (441 aa).

In terms of domain architecture, Response regulatory spans D7 to L121. D56 carries the post-translational modification 4-aspartylphosphate. A Sigma-54 factor interaction domain is found at M141–V370. ATP is bound by residues G172, T173, R329, and R359. Positions K421–S440 form a DNA-binding region, H-T-H motif.

Forms homohexamers in the crystal structure. However, the dimerization interface between DNA-binding domains observed in the crystal structure suggests that dodecamers, rather than hexamers, might be the functionally important oligomer. Post-translationally, phosphorylated by ZraS.

It localises to the cytoplasm. Activity of the ZraS/ZraR two-component system is repressed by the zinc-bound form of ZraP, which probably interacts with the periplasmic region of ZraS. In terms of biological role, part of the Zra signaling pathway, an envelope stress response (ESR) system composed of the periplasmic accessory protein ZraP, the histidine kinase ZraS and the transcriptional regulator ZraR. The ZraPSR system contributes to antibiotic resistance and is important for membrane integrity in the presence of membrane-targeting biocides. ZraR is a member of the two-component regulatory system ZraS/ZraR. When activated by ZraS, acts in conjunction with sigma-54 to regulate the expression of zraP in the presence of high Zn(2+) or Pb(2+) concentrations. Also positively autoregulates the expression of the zraSR operon. This is Transcriptional regulatory protein ZraR from Salmonella typhimurium (strain LT2 / SGSC1412 / ATCC 700720).